The following is a 154-amino-acid chain: Protein E6 (154 aa).

2 zinc fingers span residues 30–66 and 103–139; these read CVFC…CPRC and CCKC…CLHC.

It belongs to the papillomaviridae E6 protein family. Forms homodimers. Interacts with ubiquitin-protein ligase UBE3A/E6-AP; this interaction stimulates UBE3A ubiquitin activity. Interacts with host TP53 and EP300; this interaction inhibits TP53 activity.

It is found in the host cytoplasm. The protein localises to the host nucleus. Functionally, plays a major role in the induction and maintenance of cellular transformation. E6 associates with host UBE3A/E6-AP ubiquitin-protein ligase and modulates its activity. Sequesters tumor suppressor TP53 in the host cytoplasm and modulates its activity by interacting with host EP300 that results in the reduction of TP53 acetylation and activation. In turn, apoptosis induced by DNA damage is inhibited. E6 also protects host keratinocytes from apoptosis by mediating the degradation of host BAK1. May also inhibit host immune response. This is Protein E6 from Homo sapiens (Human).